A 115-amino-acid chain; its full sequence is Ribosome-binding factor A (115 aa).

Belongs to the RbfA family. Monomer. Binds 30S ribosomal subunits, but not 50S ribosomal subunits or 70S ribosomes.

The protein resides in the cytoplasm. Its function is as follows. One of several proteins that assist in the late maturation steps of the functional core of the 30S ribosomal subunit. Associates with free 30S ribosomal subunits (but not with 30S subunits that are part of 70S ribosomes or polysomes). Required for efficient processing of 16S rRNA. May interact with the 5'-terminal helix region of 16S rRNA. The chain is Ribosome-binding factor A from Bacillus velezensis (strain DSM 23117 / BGSC 10A6 / LMG 26770 / FZB42) (Bacillus amyloliquefaciens subsp. plantarum).